Consider the following 424-residue polypeptide: UPF0597 protein Sbal_3070 (424 aa).

Belongs to the UPF0597 family.

This Shewanella baltica (strain OS155 / ATCC BAA-1091) protein is UPF0597 protein Sbal_3070.